We begin with the raw amino-acid sequence, 122 residues long: Large ribosomal subunit protein bL20c (122 aa).

The protein belongs to the bacterial ribosomal protein bL20 family.

The protein resides in the plastid. Its subcellular location is the chloroplast. Its function is as follows. Binds directly to 23S ribosomal RNA and is necessary for the in vitro assembly process of the 50S ribosomal subunit. It is not involved in the protein synthesizing functions of that subunit. This Dioscorea elephantipes (Elephant's foot yam) protein is Large ribosomal subunit protein bL20c.